A 219-amino-acid polypeptide reads, in one-letter code: Large ribosomal subunit protein uL3 (219 aa).

Belongs to the universal ribosomal protein uL3 family. Part of the 50S ribosomal subunit. Forms a cluster with proteins L14 and L19.

Functionally, one of the primary rRNA binding proteins, it binds directly near the 3'-end of the 23S rRNA, where it nucleates assembly of the 50S subunit. The polypeptide is Large ribosomal subunit protein uL3 (Corynebacterium kroppenstedtii (strain DSM 44385 / JCM 11950 / CIP 105744 / CCUG 35717)).